Here is a 113-residue protein sequence, read N- to C-terminus: Large ribosomal subunit protein uL22 (113 aa).

Belongs to the universal ribosomal protein uL22 family. Part of the 50S ribosomal subunit.

This protein binds specifically to 23S rRNA; its binding is stimulated by other ribosomal proteins, e.g. L4, L17, and L20. It is important during the early stages of 50S assembly. It makes multiple contacts with different domains of the 23S rRNA in the assembled 50S subunit and ribosome. In terms of biological role, the globular domain of the protein is located near the polypeptide exit tunnel on the outside of the subunit, while an extended beta-hairpin is found that lines the wall of the exit tunnel in the center of the 70S ribosome. The sequence is that of Large ribosomal subunit protein uL22 from Anoxybacillus flavithermus (strain DSM 21510 / WK1).